Here is an 858-residue protein sequence, read N- to C-terminus: Myosin-K heavy chain (858 aa).

One can recognise a Myosin motor domain in the interval 7–820 (SGVDDLVLVS…TIFVMEDLLM (814 aa)). ATP is bound at residue 100 to 107 (GESGAGKT). The disordered stretch occupies residues 121 to 265 (SPNNSSGGGI…GGGYGGSSKT (145 aa)). 2 stretches are compositionally biased toward gly residues: residues 126-139 (SGGG…GNGG) and 157-182 (RGMG…SRGG). The segment covering 183–228 (GPPPTRGRGGPPPPIPQNRGAPPPVSNGGAPPPVARGPVAPPPTRG) has biased composition (pro residues). A compositionally biased stretch (gly residues) spans 233-245 (RGGGPANRGGRGG). An actin-binding region spans residues 712 to 722 (PHYIRCIKPND). Residues 821–858 (QKIDPIGYKNRVQAYKENEKLAQMKQGKHSMKQKCLIQ) are tail.

It belongs to the TRAFAC class myosin-kinesin ATPase superfamily. Myosin family.

It is found in the cytoplasm. Its function is as follows. Myosins are actin-based motor molecules with ATPase activity. Involved in phagocytosis and motility, and in the maintenance and dynamics of cell cortex. The sequence is that of Myosin-K heavy chain (myoK) from Dictyostelium discoideum (Social amoeba).